Here is a 134-residue protein sequence, read N- to C-terminus: DNA-binding protein H-NS, plasmid (134 aa).

Positions Leu23–Glu67 form a coiled coil. The disordered stretch occupies residues Ser77–Lys96. The DNA-binding element occupies Gln112–Lys117.

It belongs to the histone-like protein H-NS family. Homodimer that oligomerizes on DNA into higher-order complexes that form bridges between disparate regions of DNA compacting it. Interacts with Hha, YdgT and StpA.

Its subcellular location is the cytoplasm. It localises to the nucleoid. In terms of biological role, a DNA-binding protein implicated in transcriptional repression and chromosome organization and compaction. Binds DNA, modifying gene expression, especially non-core genes. Does not regulate the same set of genes as its chromosomal counterpart (tested in S.typhimurium strain SL1344 / SV5015, chromosomal H-NS protein is AC A0A0H3NBY9). Thus it has a not-completely overlapping set of gene targets compared to its chromosomal homolog; many of these target genes are either plasmid-encoded or acquired by horizontally transferred genes (HTG). This protein can function in the absence of H-NS-modulating protein Hha (either chromosomal or plasmid-encoded), although many HTG genes are regulated by an H-NS/Hha complex. Binds nucleation sites in AT-rich DNA and bridges them, forming higher-order nucleoprotein complexes and condensing the chromosome. A subset of genes are repressed by H-NS in association with Hha and/or Cnu (ydgT). This chain is DNA-binding protein H-NS, plasmid (hns), found in Salmonella typhi.